The sequence spans 463 residues: Cysteine--tRNA ligase (463 aa).

Cys-28 is a binding site for Zn(2+). The 'HIGH' region motif lies at 30-40 (ITIYDLCHIGH). Zn(2+)-binding residues include Cys-209, His-234, and Glu-238. Residues 266 to 270 (KMSKS) carry the 'KMSKS' region motif. An ATP-binding site is contributed by Lys-269.

It belongs to the class-I aminoacyl-tRNA synthetase family. Monomer. Requires Zn(2+) as cofactor.

It is found in the cytoplasm. The catalysed reaction is tRNA(Cys) + L-cysteine + ATP = L-cysteinyl-tRNA(Cys) + AMP + diphosphate. The protein is Cysteine--tRNA ligase of Proteus mirabilis (strain HI4320).